A 408-amino-acid polypeptide reads, in one-letter code: Peptidase T (408 aa).

His-78 lines the Zn(2+) pocket. Asp-80 is a catalytic residue. Residue Asp-140 participates in Zn(2+) binding. Glu-173 (proton acceptor) is an active-site residue. Residues Glu-174, Asp-196, and His-379 each contribute to the Zn(2+) site.

Belongs to the peptidase M20B family. It depends on Zn(2+) as a cofactor.

The protein localises to the cytoplasm. It carries out the reaction Release of the N-terminal residue from a tripeptide.. Functionally, cleaves the N-terminal amino acid of tripeptides. In Escherichia coli (strain K12 / MC4100 / BW2952), this protein is Peptidase T.